Reading from the N-terminus, the 321-residue chain is L-lactate dehydrogenase (321 aa).

NAD(+) contacts are provided by residues Val-19, Asp-40, Lys-45, Tyr-71, and 85 to 86; that span reads GA. Substrate-binding positions include Gln-88, Arg-94, and 126-129; that span reads NPVD. NAD(+)-binding positions include 124 to 126 and Ser-149; that span reads ATN. Substrate is bound at residue 154–157; it reads DTAR. The beta-D-fructose 1,6-bisphosphate site is built by Arg-159 and His-174. The Proton acceptor role is filled by His-181. At Tyr-226 the chain carries Phosphotyrosine. Thr-235 contacts substrate.

This sequence belongs to the LDH/MDH superfamily. LDH family. As to quaternary structure, homotetramer.

The protein localises to the cytoplasm. The catalysed reaction is (S)-lactate + NAD(+) = pyruvate + NADH + H(+). Its pathway is fermentation; pyruvate fermentation to lactate; (S)-lactate from pyruvate: step 1/1. Its activity is regulated as follows. Allosterically activated by fructose 1,6-bisphosphate (FBP). In terms of biological role, catalyzes the conversion of lactate to pyruvate. The protein is L-lactate dehydrogenase of Oceanobacillus iheyensis (strain DSM 14371 / CIP 107618 / JCM 11309 / KCTC 3954 / HTE831).